We begin with the raw amino-acid sequence, 267 residues long: Taurine import ATP-binding protein TauB (267 aa).

Positions 6–238 (FNEASLIYPA…DILAGAPASE (233 aa)) constitute an ABC transporter domain. 43 to 50 (GRSGSGKT) is a binding site for ATP.

It belongs to the ABC transporter superfamily. Taurine importer (TC 3.A.1.17.1) family. In terms of assembly, the complex is composed of two ATP-binding proteins (TauB), two transmembrane proteins (TauC) and a solute-binding protein (TauA).

Its subcellular location is the cell inner membrane. The catalysed reaction is taurine(out) + ATP + H2O = taurine(in) + ADP + phosphate + H(+). In terms of biological role, part of the ABC transporter complex TauABC involved in taurine import. Responsible for energy coupling to the transport system. This Sinorhizobium fredii (strain NBRC 101917 / NGR234) protein is Taurine import ATP-binding protein TauB.